Reading from the N-terminus, the 393-residue chain is Acetyl-CoA acetyltransferase (393 aa).

C88 functions as the Acyl-thioester intermediate in the catalytic mechanism. Catalysis depends on proton acceptor residues H349 and C379.

Belongs to the thiolase-like superfamily. Thiolase family.

The protein localises to the cytoplasm. It catalyses the reaction 2 acetyl-CoA = acetoacetyl-CoA + CoA. Its pathway is metabolic intermediate biosynthesis; (R)-mevalonate biosynthesis; (R)-mevalonate from acetyl-CoA: step 1/3. The sequence is that of Acetyl-CoA acetyltransferase (atoB) from Pseudomonas aeruginosa (strain ATCC 15692 / DSM 22644 / CIP 104116 / JCM 14847 / LMG 12228 / 1C / PRS 101 / PAO1).